Here is a 149-residue protein sequence, read N- to C-terminus: UPF0178 protein CPF_2548 (149 aa).

This sequence belongs to the UPF0178 family.

This is UPF0178 protein CPF_2548 from Clostridium perfringens (strain ATCC 13124 / DSM 756 / JCM 1290 / NCIMB 6125 / NCTC 8237 / Type A).